The following is a 475-amino-acid chain: Ribulose bisphosphate carboxylase large chain (475 aa).

The substrate site is built by Asn-123 and Thr-173. Lys-175 serves as the catalytic Proton acceptor. Position 177 (Lys-177) interacts with substrate. Positions 201, 203, and 204 each coordinate Mg(2+). Lys-201 is subject to N6-carboxylysine. Catalysis depends on His-294, which acts as the Proton acceptor. The substrate site is built by Arg-295, His-327, and Ser-379.

It belongs to the RuBisCO large chain family. Type I subfamily. Heterohexadecamer of 8 large chains and 8 small chains; disulfide-linked. The disulfide link is formed within the large subunit homodimers. Mg(2+) is required as a cofactor. The disulfide bond which can form in the large chain dimeric partners within the hexadecamer appears to be associated with oxidative stress and protein turnover.

It localises to the plastid. The protein resides in the chloroplast. The enzyme catalyses 2 (2R)-3-phosphoglycerate + 2 H(+) = D-ribulose 1,5-bisphosphate + CO2 + H2O. It catalyses the reaction D-ribulose 1,5-bisphosphate + O2 = 2-phosphoglycolate + (2R)-3-phosphoglycerate + 2 H(+). RuBisCO catalyzes two reactions: the carboxylation of D-ribulose 1,5-bisphosphate, the primary event in carbon dioxide fixation, as well as the oxidative fragmentation of the pentose substrate in the photorespiration process. Both reactions occur simultaneously and in competition at the same active site. The protein is Ribulose bisphosphate carboxylase large chain of Euglena gracilis.